Consider the following 489-residue polypeptide: Cytochrome P450 2C70 (489 aa).

The signal sequence occupies residues 1-27 (MALFIFLGIWLSCLVFLFLWNQHHVRR). Residue Cys-434 coordinates heme.

Belongs to the cytochrome P450 family. Heme is required as a cofactor.

It is found in the endoplasmic reticulum membrane. Its subcellular location is the microsome membrane. The catalysed reaction is chenodeoxycholate + reduced [NADPH--hemoprotein reductase] + O2 = alpha-muricholate + oxidized [NADPH--hemoprotein reductase] + H2O + H(+). The enzyme catalyses ursodeoxycholate + reduced [NADPH--hemoprotein reductase] + O2 = beta-muricholate + oxidized [NADPH--hemoprotein reductase] + H2O + H(+). Functionally, a cytochrome P450 monooxygenase involved in muricholic acid (MCA) synthesis. Hydroxylates at the 6-beta position two major bile acids, chenodeoxycholic acid (CDCA) and ursodeoxycholic acid (UDCA) to form alpha-MCA and beta-MCA, respectively. May regulate NR1H4/farnesoid X receptor signaling, as taurine-conjugated MCAs are antagonists of NR1H4. Mechanistically, uses molecular oxygen inserting one oxygen atom into a substrate, and reducing the second into a water molecule, with two electrons provided by NADPH via cytochrome P450 reductase (CPR; NADPH-ferrihemoprotein reductase). The polypeptide is Cytochrome P450 2C70 (Rattus norvegicus (Rat)).